Consider the following 822-residue polypeptide: Tyrosine-protein kinase Fer (822 aa).

Residues 1 to 259 (MGFGSDLKNS…SVEQIDPSTE (259 aa)) form the F-BAR domain. Residues 1–300 (MGFGSDLKNS…QANEIMWNNL (300 aa)) are important for interaction with membranes containing phosphoinositides. 2 coiled-coil regions span residues 123–185 (AEMI…HNQY) and 301–390 (TAES…KVQE). Residue Tyr402 is modified to Phosphotyrosine. At Ser434 the chain carries Phosphoserine. The 91-residue stretch at 460–550 (WYHGAIPRIE…KSGVVLLNPI (91 aa)) folds into the SH2 domain. Positions 563–816 (VILGELLGKG…FSELQKELTI (254 aa)) constitute a Protein kinase domain. ATP-binding positions include 569–577 (LGKGNFGEV) and Lys591. Residue Tyr615 is modified to Phosphotyrosine; by autocatalysis. Asp684 acts as the Proton acceptor in catalysis. A Phosphotyrosine; by autocatalysis modification is found at Tyr714.

This sequence belongs to the protein kinase superfamily. Tyr protein kinase family. Fes/fps subfamily. As to quaternary structure, homotrimer. Interacts with ARHGDIA, IRS1, JAK1, NRP1, PIK3R1, PLEC and TMF1. Interacts with PPP1CA and regulates its phosphorylation at 'Thr-320'. Interacts with CTNND1, EGFR, FLT3, PECAM1, PDGFR and STAT3. Interacts (via SH2 domain) with CTTN. Interacts with HSP90; this stabilizes phosphorylated FER and protects FER against proteasomal degradation. Component of a complex that contains at least FER, CTTN and PTK2/FAK1. In terms of processing, autophosphorylated. Polyubiquitinated; this leads to proteasomal degradation. In terms of tissue distribution, isoform 1 is detected in normal colon and in fibroblasts (at protein level). Isoform 3 is detected in normal testis, in colon carcinoma-derived metastases in lung, liver and ovary, and in colon carcinoma and hepato carcinoma cell lines (at protein level). Isoform 3 is not detected in normal colon or in normal fibroblasts (at protein level). Widely expressed.

It is found in the cytoplasm. The protein resides in the cytoskeleton. Its subcellular location is the cell membrane. It localises to the cell projection. The protein localises to the cell junction. It is found in the membrane. The protein resides in the nucleus. Its subcellular location is the cell cortex. The enzyme catalyses L-tyrosyl-[protein] + ATP = O-phospho-L-tyrosyl-[protein] + ADP + H(+). Its activity is regulated as follows. Activated by phosphatidic acid binding. Activated by hydrogen peroxide (in vitro). Activated by reactive oxygen species (ROS). Its function is as follows. Tyrosine-protein kinase that acts downstream of cell surface receptors for growth factors and plays a role in the regulation of the actin cytoskeleton, microtubule assembly, lamellipodia formation, cell adhesion, cell migration and chemotaxis. Acts downstream of EGFR, KIT, PDGFRA and PDGFRB. Acts downstream of EGFR to promote activation of NF-kappa-B and cell proliferation. May play a role in the regulation of the mitotic cell cycle. Plays a role in the insulin receptor signaling pathway and in activation of phosphatidylinositol 3-kinase. Acts downstream of the activated FCER1 receptor and plays a role in FCER1 (high affinity immunoglobulin epsilon receptor)-mediated signaling in mast cells. Plays a role in the regulation of mast cell degranulation. Plays a role in leukocyte recruitment and diapedesis in response to bacterial lipopolysaccharide (LPS). Plays a role in synapse organization, trafficking of synaptic vesicles, the generation of excitatory postsynaptic currents and neuron-neuron synaptic transmission. Plays a role in neuronal cell death after brain damage. Phosphorylates CTTN, CTNND1, PTK2/FAK1, GAB1, PECAM1 and PTPN11. May phosphorylate JUP and PTPN1. Can phosphorylate STAT3, but the biological relevance of this depends on cell type and stimulus. The protein is Tyrosine-protein kinase Fer (FER) of Homo sapiens (Human).